The chain runs to 109 residues: Staphostatin B (109 aa).

Residues 97 to 101 (IGTSR) form a binds to staphopain B region.

The protein belongs to the protease inhibitor I57 (SspC) family. In terms of assembly, forms a stable non-covalent complex with prematurely activated/folded SspB.

Its subcellular location is the cytoplasm. Functionally, specifically inhibits the cysteine protease staphopain B (SspB) by blocking the active site of the enzyme. Probably required to protect cytoplasmic proteins from being degraded by prematurely activated/folded prostaphopain B. Also involved in growth capacity, viability and bacterial morphology. This is Staphostatin B (sspC) from Staphylococcus aureus (strain MRSA252).